The chain runs to 153 residues: UPF0178 protein Atu1478 (153 aa).

Belongs to the UPF0178 family.

This Agrobacterium fabrum (strain C58 / ATCC 33970) (Agrobacterium tumefaciens (strain C58)) protein is UPF0178 protein Atu1478.